The following is a 475-amino-acid chain: Cytosolic enolase 3 (475 aa).

Ser-2 is modified (N-acetylserine). The substrate site is built by His-200 and Glu-209. The active-site Proton donor is the Asp-252. Asp-287, Glu-336, and Asp-361 together coordinate Mg(2+). 2 residues coordinate substrate: Glu-336 and Asp-361. Catalysis depends on Lys-386, which acts as the Proton acceptor. Substrate is bound by residues 413–416 and Lys-437; that span reads SHRC.

Belongs to the enolase family. In terms of assembly, homodimer. Mg(2+) serves as cofactor.

The protein resides in the cytoplasm. The protein localises to the nucleus. The enzyme catalyses (2R)-2-phosphoglycerate = phosphoenolpyruvate + H2O. It participates in carbohydrate degradation; glycolysis; pyruvate from D-glyceraldehyde 3-phosphate: step 4/5. The polypeptide is Cytosolic enolase 3 (ENO3) (Arabidopsis thaliana (Mouse-ear cress)).